The chain runs to 677 residues: Beta-galactosidase (677 aa).

An N-terminal signal peptide occupies residues 1 to 23 (MPGFLVRILPLLLALLLLGPTRG). The propeptide occupies 24–28 (LRNAT). A glycan (N-linked (GlcNAc...) asparagine) is linked at asparagine 26. Residues tyrosine 83, glutamate 129, and asparagine 187 each contribute to the substrate site. Glutamate 188 functions as the Proton donor in the catalytic mechanism. A disulfide bridge links cysteine 195 with cysteine 230. N-linked (GlcNAc...) asparagine glycosylation is present at asparagine 247. The active-site Nucleophile is the glutamate 268. Position 333 (tyrosine 333) interacts with substrate. 4 N-linked (GlcNAc...) asparagine glycosylation sites follow: asparagine 464, asparagine 498, asparagine 545, and asparagine 555. Cysteine 626 and cysteine 634 are disulfide-bonded. Residues 654 to 677 (SKPVEKKLMPSPPQKNKDSWLDHV) form a disordered region. Residues 668–677 (KNKDSWLDHV) are compositionally biased toward basic and acidic residues.

This sequence belongs to the glycosyl hydrolase 35 family. Homodimer. May form higher multimers.

Its subcellular location is the lysosome. It carries out the reaction Hydrolysis of terminal non-reducing beta-D-galactose residues in beta-D-galactosides.. Cleaves beta-linked terminal galactosyl residues from gangliosides, glycoproteins, and glycosaminoglycans. The sequence is that of Beta-galactosidase (GLB1) from Pongo abelii (Sumatran orangutan).